The sequence spans 116 residues: Large ribosomal subunit protein uL18 (116 aa).

It belongs to the universal ribosomal protein uL18 family. In terms of assembly, part of the 50S ribosomal subunit; part of the 5S rRNA/L5/L18/L25 subcomplex. Contacts the 5S and 23S rRNAs.

Its function is as follows. This is one of the proteins that bind and probably mediate the attachment of the 5S RNA into the large ribosomal subunit, where it forms part of the central protuberance. The polypeptide is Large ribosomal subunit protein uL18 (Pseudomonas putida (strain GB-1)).